The sequence spans 130 residues: Phosphoribosyl-AMP cyclohydrolase (130 aa).

Position 77 (Asp-77) interacts with Mg(2+). Cys-78 is a binding site for Zn(2+). Mg(2+) is bound by residues Asp-79 and Asp-81. Residues Cys-95 and Cys-102 each contribute to the Zn(2+) site.

This sequence belongs to the PRA-CH family. In terms of assembly, homodimer. It depends on Mg(2+) as a cofactor. Zn(2+) is required as a cofactor.

Its subcellular location is the cytoplasm. It catalyses the reaction 1-(5-phospho-beta-D-ribosyl)-5'-AMP + H2O = 1-(5-phospho-beta-D-ribosyl)-5-[(5-phospho-beta-D-ribosylamino)methylideneamino]imidazole-4-carboxamide. Its pathway is amino-acid biosynthesis; L-histidine biosynthesis; L-histidine from 5-phospho-alpha-D-ribose 1-diphosphate: step 3/9. Catalyzes the hydrolysis of the adenine ring of phosphoribosyl-AMP. This Pseudomonas syringae pv. tomato (strain ATCC BAA-871 / DC3000) protein is Phosphoribosyl-AMP cyclohydrolase.